The following is a 110-amino-acid chain: Small ribosomal subunit protein eS24 (110 aa).

The interval 91–110 is disordered; it reads RNKVEEQAEEAEEAEAGAAE. A compositionally biased stretch (acidic residues) spans 97–110; it reads QAEEAEEAEAGAAE.

It belongs to the eukaryotic ribosomal protein eS24 family.

In Archaeoglobus fulgidus (strain ATCC 49558 / DSM 4304 / JCM 9628 / NBRC 100126 / VC-16), this protein is Small ribosomal subunit protein eS24.